Consider the following 576-residue polypeptide: Arginine--tRNA ligase (576 aa).

The short motif at 122–132 (PNVAKQMHVGH) is the 'HIGH' region element.

Belongs to the class-I aminoacyl-tRNA synthetase family. As to quaternary structure, monomer.

It localises to the cytoplasm. It catalyses the reaction tRNA(Arg) + L-arginine + ATP = L-arginyl-tRNA(Arg) + AMP + diphosphate. The chain is Arginine--tRNA ligase from Yersinia pseudotuberculosis serotype IB (strain PB1/+).